An 804-amino-acid chain; its full sequence is Protein-lysine N-methyltransferase SMYD4 (804 aa).

Residue 112–114 (RSA) coordinates S-adenosyl-L-methionine. In terms of domain architecture, SET spans 233–574 (SSVGLCIDPL…KGQEILHCYG (342 aa)). Residues Cys296, Cys299, Cys309, Cys312, Cys318, Cys322, His331, and Cys335 each coordinate Zn(2+). The segment at 296–335 (CHRCLKHTLATVPCDGCSYAKYCSQECLQQAWELYHRTEC) adopts an MYND-type zinc-finger fold. Residues Asn427, 539 to 540 (NH), Tyr573, and Phe595 each bind S-adenosyl-L-methionine.

It belongs to the class V-like SAM-binding methyltransferase superfamily. As to quaternary structure, interacts (via MYND-type zinc finger) with HDAC1.

Its subcellular location is the nucleus. The protein resides in the cytoplasm. The enzyme catalyses L-lysyl-[protein] + S-adenosyl-L-methionine = N(6)-methyl-L-lysyl-[protein] + S-adenosyl-L-homocysteine + H(+). Its function is as follows. Protein-lysine N-methyltransferase. Monomethylates PRMT5, modulating its transcriptional activity. May also act as a histone methyltransferase. Plays a critical role in cardiac development. Acts as a key epigenetic regulator of gene expression during cardiac development via its dual activities as a methyltransferase and negative regulator of HDAC1. This chain is Protein-lysine N-methyltransferase SMYD4 (SMYD4), found in Pongo abelii (Sumatran orangutan).